The sequence spans 194 residues: ATP-dependent Clp protease proteolytic subunit 3 (194 aa).

The Nucleophile role is filled by serine 96. Histidine 121 is an active-site residue.

This sequence belongs to the peptidase S14 family. As to quaternary structure, fourteen ClpP subunits assemble into 2 heptameric rings which stack back to back to give a disk-like structure with a central cavity, resembling the structure of eukaryotic proteasomes.

The protein resides in the cytoplasm. The catalysed reaction is Hydrolysis of proteins to small peptides in the presence of ATP and magnesium. alpha-casein is the usual test substrate. In the absence of ATP, only oligopeptides shorter than five residues are hydrolyzed (such as succinyl-Leu-Tyr-|-NHMec, and Leu-Tyr-Leu-|-Tyr-Trp, in which cleavage of the -Tyr-|-Leu- and -Tyr-|-Trp bonds also occurs).. Its function is as follows. Cleaves peptides in various proteins in a process that requires ATP hydrolysis. Has a chymotrypsin-like activity. Plays a major role in the degradation of misfolded proteins. The chain is ATP-dependent Clp protease proteolytic subunit 3 from Prochlorococcus marinus (strain NATL2A).